The primary structure comprises 606 residues: NADH-ubiquinone oxidoreductase chain 5 (606 aa).

Transmembrane regions (helical) follow at residues 1-21, 43-63, 88-108, 117-137, 140-160, 171-191, 209-229, 241-261, 273-293, 310-330, 366-386, 413-433, 457-477, 488-508, 513-533, and 582-602; these read MNLF…PIIM, AFII…EAII, IFIP…MWYM, FFKY…ANNL, LFIG…WWYG, AILY…WFLT, LNIP…QFGL, TPVS…FLLI, MQTL…ICAL, LGLM…LHIC, MPFT…MPFL, LIAT…VLLG, LLIG…PTTI, LTAL…NLAA, FMYP…PIVM, and GLVK…LILL.

This sequence belongs to the complex I subunit 5 family. As to quaternary structure, core subunit of respiratory chain NADH dehydrogenase (Complex I) which is composed of 45 different subunits.

The protein resides in the mitochondrion inner membrane. It carries out the reaction a ubiquinone + NADH + 5 H(+)(in) = a ubiquinol + NAD(+) + 4 H(+)(out). In terms of biological role, core subunit of the mitochondrial membrane respiratory chain NADH dehydrogenase (Complex I) which catalyzes electron transfer from NADH through the respiratory chain, using ubiquinone as an electron acceptor. Essential for the catalytic activity and assembly of complex I. This is NADH-ubiquinone oxidoreductase chain 5 (MT-ND5) from Felis catus (Cat).